The following is a 432-amino-acid chain: UPF0597 protein APJL_1638 (432 aa).

It belongs to the UPF0597 family.

The protein is UPF0597 protein APJL_1638 of Actinobacillus pleuropneumoniae serotype 3 (strain JL03).